Consider the following 284-residue polypeptide: T-cell leukemia homeobox protein 2 (284 aa).

Disordered regions lie at residues 1–50 (MEPG…NGAF), 78–106 (GGVI…GPSG), and 139–166 (FSGT…SFSR). Over residues 30–50 (TPGGGLGLGRGGQGHGENGAF) the composition is skewed to gly residues. Over residues 87-96 (RPLPVPPPAG) the composition is skewed to pro residues. The homeobox DNA-binding region spans 157–216 (RKKPRTSFSRSQVLELERRFLRQKYLASAERAALAKALRMTDAQVKTWFQNRRTKWRRQT).

The protein localises to the nucleus. Transcription activator that binds DNA elements with the consensus sequence 5'-CGGTAATTGG-3'. Binds DNA via its homeobox. Required for normal cell death of enteric neurons in the gastrointestinal tract. Required for normal development of the enteric nervous system, and for proper development of normal motility of the gastrointestinal tract. This Homo sapiens (Human) protein is T-cell leukemia homeobox protein 2 (TLX2).